The chain runs to 357 residues: Sulfate/thiosulfate import ATP-binding protein CysA (357 aa).

One can recognise an ABC transporter domain in the interval Ile3–Leu237. Residue Gly35 to Thr42 participates in ATP binding.

Belongs to the ABC transporter superfamily. Sulfate/tungstate importer (TC 3.A.1.6) family. The complex is composed of two ATP-binding proteins (CysA), two transmembrane proteins (CysT and CysW) and a solute-binding protein (CysP).

It localises to the cell membrane. The enzyme catalyses sulfate(out) + ATP + H2O = sulfate(in) + ADP + phosphate + H(+). It catalyses the reaction thiosulfate(out) + ATP + H2O = thiosulfate(in) + ADP + phosphate + H(+). Part of the ABC transporter complex CysAWTP involved in sulfate/thiosulfate import. Responsible for energy coupling to the transport system. The sequence is that of Sulfate/thiosulfate import ATP-binding protein CysA from Bacillus cereus (strain ATCC 14579 / DSM 31 / CCUG 7414 / JCM 2152 / NBRC 15305 / NCIMB 9373 / NCTC 2599 / NRRL B-3711).